The following is a 601-amino-acid chain: Elongation factor 4 (601 aa).

One can recognise a tr-type G domain in the interval 6 to 188; sequence NYIRNFSIVA…AIVTQLPSPR (183 aa). GTP contacts are provided by residues 18–23 and 135–138; these read DHGKST and NKVD.

The protein belongs to the TRAFAC class translation factor GTPase superfamily. Classic translation factor GTPase family. LepA subfamily.

The protein localises to the cell inner membrane. The enzyme catalyses GTP + H2O = GDP + phosphate + H(+). Functionally, required for accurate and efficient protein synthesis under certain stress conditions. May act as a fidelity factor of the translation reaction, by catalyzing a one-codon backward translocation of tRNAs on improperly translocated ribosomes. Back-translocation proceeds from a post-translocation (POST) complex to a pre-translocation (PRE) complex, thus giving elongation factor G a second chance to translocate the tRNAs correctly. Binds to ribosomes in a GTP-dependent manner. The protein is Elongation factor 4 of Bartonella henselae (strain ATCC 49882 / DSM 28221 / CCUG 30454 / Houston 1) (Rochalimaea henselae).